Here is a 323-residue protein sequence, read N- to C-terminus: tRNA-cytidine(32) 2-sulfurtransferase (323 aa).

The PP-loop motif motif lies at 49-54 (SGGKDS). [4Fe-4S] cluster-binding residues include cysteine 124, cysteine 127, and cysteine 215.

This sequence belongs to the TtcA family. As to quaternary structure, homodimer. It depends on Mg(2+) as a cofactor. [4Fe-4S] cluster is required as a cofactor.

The protein localises to the cytoplasm. It carries out the reaction cytidine(32) in tRNA + S-sulfanyl-L-cysteinyl-[cysteine desulfurase] + AH2 + ATP = 2-thiocytidine(32) in tRNA + L-cysteinyl-[cysteine desulfurase] + A + AMP + diphosphate + H(+). Its pathway is tRNA modification. Its function is as follows. Catalyzes the ATP-dependent 2-thiolation of cytidine in position 32 of tRNA, to form 2-thiocytidine (s(2)C32). The sulfur atoms are provided by the cysteine/cysteine desulfurase (IscS) system. This chain is tRNA-cytidine(32) 2-sulfurtransferase, found in Shewanella denitrificans (strain OS217 / ATCC BAA-1090 / DSM 15013).